Here is a 222-residue protein sequence, read N- to C-terminus: 3,4-dihydroxy-2-butanone 4-phosphate synthase (222 aa).

Residues 37–38, aspartate 42, 150–154, and glutamate 174 each bind D-ribulose 5-phosphate; these read RE and RPGHT. Position 38 (glutamate 38) interacts with Mg(2+). Histidine 153 is a Mg(2+) binding site.

The protein belongs to the DHBP synthase family. Homodimer. Requires Mg(2+) as cofactor. It depends on Mn(2+) as a cofactor.

The catalysed reaction is D-ribulose 5-phosphate = (2S)-2-hydroxy-3-oxobutyl phosphate + formate + H(+). It participates in cofactor biosynthesis; riboflavin biosynthesis; 2-hydroxy-3-oxobutyl phosphate from D-ribulose 5-phosphate: step 1/1. Its function is as follows. Catalyzes the conversion of D-ribulose 5-phosphate to formate and 3,4-dihydroxy-2-butanone 4-phosphate. This Chlorobium limicola (strain DSM 245 / NBRC 103803 / 6330) protein is 3,4-dihydroxy-2-butanone 4-phosphate synthase.